Here is a 144-residue protein sequence, read N- to C-terminus: uncharacterized protein (144 aa).

Residues 4-111 (VFCAIIAGEA…LPPRNGDKLS (108 aa)) enclose the HIT domain. The Histidine triad motif signature appears at 96–100 (HVHLH).

This is an uncharacterized protein from Mycobacterium tuberculosis (strain CDC 1551 / Oshkosh).